A 212-amino-acid polypeptide reads, in one-letter code: MTTSSRSRSSTVAAATLGEDDLSSNAQKERRKRILDATLALASKGGYEAVQMRAVAERADVAVGTLYRYFPSKVHLLVSALAREFERIDSRGKNPPGRNPLERMQLILSQITRAMQRDPLLTEAMTRAFMFADASAAAEVDQVGKLMDRLFARAMTDTEPTEDQLAVARVISDVWLSNLVAWLTRRSSATDVANRLELTVELLLGDGSRRPE.

The segment covering 1-11 (MTTSSRSRSST) has biased composition (low complexity). Residues 1-28 (MTTSSRSRSSTVAAATLGEDDLSSNAQK) are disordered. An HTH tetR-type domain is found at 28-88 (KERRKRILDA…SALAREFERI (61 aa)). A DNA-binding region (H-T-H motif) is located at residues 51–70 (QMRAVAERADVAVGTLYRYF).

As to quaternary structure, homodimer.

Functionally, controls the expression of genes used for utilizing diverse lipids as energy sources. This is HTH-type transcriptional repressor KstR (kstR) from Rhodococcus jostii (strain RHA1).